A 445-amino-acid polypeptide reads, in one-letter code: C4-dicarboxylate transport protein (445 aa).

A run of 8 helical transmembrane segments spans residues Val24–Pro44, Leu62–Ile82, Phe105–Ala125, Gly163–Gly183, Phe201–Phe221, Leu234–Gly254, Ile322–Gly342, and Ala370–Ile390.

It belongs to the dicarboxylate/amino acid:cation symporter (DAACS) (TC 2.A.23) family.

Its subcellular location is the cell inner membrane. Responsible for the transport of dicarboxylates such as succinate, fumarate, and malate from the periplasm across the membrane. In Rhodopseudomonas palustris (strain ATCC BAA-98 / CGA009), this protein is C4-dicarboxylate transport protein.